The following is a 284-amino-acid chain: 4-diphosphocytidyl-2-C-methyl-D-erythritol kinase (284 aa).

Lysine 9 is an active-site residue. Proline 92–serine 102 serves as a coordination point for ATP. Residue aspartate 134 is part of the active site.

It belongs to the GHMP kinase family. IspE subfamily.

It carries out the reaction 4-CDP-2-C-methyl-D-erythritol + ATP = 4-CDP-2-C-methyl-D-erythritol 2-phosphate + ADP + H(+). It participates in isoprenoid biosynthesis; isopentenyl diphosphate biosynthesis via DXP pathway; isopentenyl diphosphate from 1-deoxy-D-xylulose 5-phosphate: step 3/6. In terms of biological role, catalyzes the phosphorylation of the position 2 hydroxy group of 4-diphosphocytidyl-2C-methyl-D-erythritol. In Stutzerimonas stutzeri (strain A1501) (Pseudomonas stutzeri), this protein is 4-diphosphocytidyl-2-C-methyl-D-erythritol kinase.